Here is a 217-residue protein sequence, read N- to C-terminus: Protein-L-isoaspartate O-methyltransferase (217 aa).

Serine 64 is a catalytic residue.

Belongs to the methyltransferase superfamily. L-isoaspartyl/D-aspartyl protein methyltransferase family.

It is found in the cytoplasm. It carries out the reaction [protein]-L-isoaspartate + S-adenosyl-L-methionine = [protein]-L-isoaspartate alpha-methyl ester + S-adenosyl-L-homocysteine. Functionally, catalyzes the methyl esterification of L-isoaspartyl residues in peptides and proteins that result from spontaneous decomposition of normal L-aspartyl and L-asparaginyl residues. It plays a role in the repair and/or degradation of damaged proteins. This chain is Protein-L-isoaspartate O-methyltransferase, found in Azorhizobium caulinodans (strain ATCC 43989 / DSM 5975 / JCM 20966 / LMG 6465 / NBRC 14845 / NCIMB 13405 / ORS 571).